We begin with the raw amino-acid sequence, 172 residues long: Bifunctional protein PyrR (172 aa).

A PRPP-binding motif is present at residues 93 to 105 (VILIDDVLYTGRT).

This sequence belongs to the purine/pyrimidine phosphoribosyltransferase family. PyrR subfamily. In terms of assembly, homodimer and homohexamer; in equilibrium.

It catalyses the reaction UMP + diphosphate = 5-phospho-alpha-D-ribose 1-diphosphate + uracil. Functionally, regulates transcriptional attenuation of the pyrimidine nucleotide (pyr) operon by binding in a uridine-dependent manner to specific sites on pyr mRNA. This disrupts an antiterminator hairpin in the RNA and favors formation of a downstream transcription terminator, leading to a reduced expression of downstream genes. In terms of biological role, also displays a weak uracil phosphoribosyltransferase activity which is not physiologically significant. The sequence is that of Bifunctional protein PyrR from Streptococcus sanguinis (strain SK36).